A 118-amino-acid polypeptide reads, in one-letter code: MARIAGINIPEHKHAVIAIQAIYGVGPTRAKSICAGAGVAENTKIKELDEATIDKLRDEVAKFTVEGDLRREVSMSIKRLMDLGCFRGIRHRRSLPLRGQRTKTNARTRKGPRKPIKK.

Residues 94 to 118 are disordered; it reads SLPLRGQRTKTNARTRKGPRKPIKK.

The protein belongs to the universal ribosomal protein uS13 family. In terms of assembly, part of the 30S ribosomal subunit. Forms a loose heterodimer with protein S19. Forms two bridges to the 50S subunit in the 70S ribosome.

Located at the top of the head of the 30S subunit, it contacts several helices of the 16S rRNA. In the 70S ribosome it contacts the 23S rRNA (bridge B1a) and protein L5 of the 50S subunit (bridge B1b), connecting the 2 subunits; these bridges are implicated in subunit movement. Contacts the tRNAs in the A and P-sites. The chain is Small ribosomal subunit protein uS13 from Alteromonas mediterranea (strain DSM 17117 / CIP 110805 / LMG 28347 / Deep ecotype).